The chain runs to 1342 residues: DNA-directed RNA polymerase subunit beta (1342 aa).

It belongs to the RNA polymerase beta chain family. As to quaternary structure, the RNAP catalytic core consists of 2 alpha, 1 beta, 1 beta' and 1 omega subunit. When a sigma factor is associated with the core the holoenzyme is formed, which can initiate transcription.

It catalyses the reaction RNA(n) + a ribonucleoside 5'-triphosphate = RNA(n+1) + diphosphate. Its function is as follows. DNA-dependent RNA polymerase catalyzes the transcription of DNA into RNA using the four ribonucleoside triphosphates as substrates. This Enterobacter sp. (strain 638) protein is DNA-directed RNA polymerase subunit beta.